The following is a 776-amino-acid chain: Protein SEY1 (776 aa).

Over 1-681 the chain is Cytoplasmic; that stretch reads MADRSAIQLI…KRSIITTRTH (681 aa). The GB1/RHD3-type G domain maps to 34–263; that stretch reads GLDYHVISVF…TENYYFKPQY (230 aa). 44–51 contacts GTP; the sequence is GSQSSGKS. A helical membrane pass occupies residues 682-702; that stretch reads IPPWIYVLLAVLGWNEFVAVI. Over 703 to 705 the chain is Lumenal; sequence RNP. A helical transmembrane segment spans residues 706-726; it reads LFVTLTLILGATFFVIHKFGL. Topologically, residues 727 to 776 are cytoplasmic; that stretch reads WGPVVNVVQSAVGETRTAIKDKLRQFVVEDHEVKESFEMKDFSKNEQKEK.

Belongs to the TRAFAC class dynamin-like GTPase superfamily. GB1/RHD3 GTPase family. RHD3 subfamily. As to quaternary structure, interacts with RTN1 and YOP1; GTP binding is not required for these interactions.

It is found in the endoplasmic reticulum membrane. Cooperates with the reticulon proteins RTN1 and RTN2 and the tubule-shaping DP1 family protein YOP1 to generate and maintain the structure of the tubular endoplasmic reticulum network. Has GTPase activity, which is required for its function in ER organization. This chain is Protein SEY1, found in Saccharomyces cerevisiae (strain AWRI1631) (Baker's yeast).